Here is a 76-residue protein sequence, read N- to C-terminus: Signal recognition particle 9 kDa protein (76 aa).

The protein belongs to the SRP9 family. Heterodimer with SRP14; binds RNA as heterodimer. Component of a signal recognition particle complex that consists of a 7SL RNA molecule of 300 nucleotides and six protein subunits: srpa-72, srpa-68, SRP54, F37F2.2/SRP19, F25G6.8/SRP14 and ZK512.4/SRP9.

It is found in the cytoplasm. In terms of biological role, component of the signal recognition particle (SRP) complex, a ribonucleoprotein complex that mediates the cotranslational targeting of secretory and membrane proteins to the endoplasmic reticulum (ER). SRP9 together with SRP14 and the Alu portion of the SRP RNA, constitutes the elongation arrest domain of SRP. The complex of SRP9 and SRP14 is required for SRP RNA binding. This is Signal recognition particle 9 kDa protein from Caenorhabditis elegans.